Consider the following 469-residue polypeptide: Glutamate--tRNA ligase (469 aa).

The short motif at Pro-9–Gly-19 is the 'HIGH' region element. The 'KMSKS' region motif lies at Lys-236–Arg-240. Lys-239 is an ATP binding site.

It belongs to the class-I aminoacyl-tRNA synthetase family. Glutamate--tRNA ligase type 1 subfamily. As to quaternary structure, monomer.

The protein resides in the cytoplasm. The enzyme catalyses tRNA(Glu) + L-glutamate + ATP = L-glutamyl-tRNA(Glu) + AMP + diphosphate. Its function is as follows. Catalyzes the attachment of glutamate to tRNA(Glu) in a two-step reaction: glutamate is first activated by ATP to form Glu-AMP and then transferred to the acceptor end of tRNA(Glu). The polypeptide is Glutamate--tRNA ligase (Shewanella frigidimarina (strain NCIMB 400)).